The sequence spans 366 residues: Sec-independent protein translocase protein TatC (366 aa).

The next 7 membrane-spanning stretches (helical) occupy residues 42–62 (VLAV…LFTM), 70–90 (HMPA…FIPL), 97–117 (AVFI…APGL), 134–154 (ILFY…VFGF), 179–199 (LFFA…LVIV), 207–227 (LAGF…ILTP), and 230–250 (VLSQ…GLFV). Residues 266 to 279 (EAEESGAADDESDE) are compositionally biased toward acidic residues. The disordered stretch occupies residues 266–366 (EAEESGAADD…PSPKKPDSPV (101 aa)). Basic and acidic residues-rich tracts occupy residues 281-290 (VSARHAEYEA) and 301-318 (DMDK…RLES). Residues 319–333 (DSSASDDGPESNTAG) show a composition bias toward polar residues.

The protein belongs to the TatC family. In terms of assembly, the Tat system comprises two distinct complexes: a TatABC complex, containing multiple copies of TatA, TatB and TatC subunits, and a separate TatA complex, containing only TatA subunits. Substrates initially bind to the TatABC complex, which probably triggers association of the separate TatA complex to form the active translocon.

The protein resides in the cell inner membrane. In terms of biological role, part of the twin-arginine translocation (Tat) system that transports large folded proteins containing a characteristic twin-arginine motif in their signal peptide across membranes. Together with TatB, TatC is part of a receptor directly interacting with Tat signal peptides. The polypeptide is Sec-independent protein translocase protein TatC (Halothiobacillus neapolitanus (strain ATCC 23641 / c2) (Thiobacillus neapolitanus)).